The following is a 205-amino-acid chain: Large ribosomal subunit protein uL3 (205 aa).

This sequence belongs to the universal ribosomal protein uL3 family. In terms of assembly, part of the 50S ribosomal subunit. Forms a cluster with proteins L14 and L19.

Its function is as follows. One of the primary rRNA binding proteins, it binds directly near the 3'-end of the 23S rRNA, where it nucleates assembly of the 50S subunit. This chain is Large ribosomal subunit protein uL3, found in Bacteroides thetaiotaomicron (strain ATCC 29148 / DSM 2079 / JCM 5827 / CCUG 10774 / NCTC 10582 / VPI-5482 / E50).